A 436-amino-acid polypeptide reads, in one-letter code: 3-ketoacyl-CoA thiolase (436 aa).

Cysteine 99 serves as the catalytic Acyl-thioester intermediate. Residues histidine 392 and cysteine 422 each act as proton acceptor in the active site.

This sequence belongs to the thiolase-like superfamily. Thiolase family. Heterotetramer of two alpha chains (FadJ) and two beta chains (FadI).

It localises to the cytoplasm. The enzyme catalyses an acyl-CoA + acetyl-CoA = a 3-oxoacyl-CoA + CoA. The protein operates within lipid metabolism; fatty acid beta-oxidation. In terms of biological role, catalyzes the final step of fatty acid oxidation in which acetyl-CoA is released and the CoA ester of a fatty acid two carbons shorter is formed. The chain is 3-ketoacyl-CoA thiolase from Photobacterium profundum (strain SS9).